Consider the following 348-residue polypeptide: D-alanine--D-alanine ligase (348 aa).

The ATP-grasp domain occupies 136-341 (KYLLQTVGIP…YSDLIEELIQ (206 aa)). 169-224 (EGSLIYPVFVKPANMGSSVGISKVENREELQEALEEAFRYDARAIVEQGIEAREIE) provides a ligand contact to ATP. Mg(2+)-binding residues include Asp-295, Glu-308, and Asn-310.

The protein belongs to the D-alanine--D-alanine ligase family. Requires Mg(2+) as cofactor. The cofactor is Mn(2+).

The protein resides in the cytoplasm. The catalysed reaction is 2 D-alanine + ATP = D-alanyl-D-alanine + ADP + phosphate + H(+). It functions in the pathway cell wall biogenesis; peptidoglycan biosynthesis. Cell wall formation. In Enterococcus faecalis (strain ATCC 700802 / V583), this protein is D-alanine--D-alanine ligase (ddl).